The following is a 122-amino-acid chain: Vacuolar transporter chaperone complex subunit 1 (122 aa).

Residues 1 to 32 are Cytoplasmic-facing; the sequence is MSTQPLLQTTPGKRIALPVRVEPKVFFANERT. A helical membrane pass occupies residues 33 to 53; the sequence is FLSWLSFAVVLGGLSVGLLNF. Over 54-59 the chain is Vacuolar; sequence GDRIGK. Residues 60–80 traverse the membrane as a helical segment; the sequence is ISAGLFTIVAIGTMGYALGIY. The Cytoplasmic segment spans residues 81 to 101; the sequence is HWRASAIRRRGSGPYDDRLGP. A helical transmembrane segment spans residues 102-122; it reads TILCFVLLAAIITNFVLRMLF.

The protein belongs to the VTC1 family. In terms of assembly, the VTC core complex is an integral membrane heterooligomer composed of at least the catalytic subunit vtc4 and the accessory subunits vtc1 and vtc2. vtc1 is a small membrane protein without hydrophilic domain. Vtc2 and vtc4 are related and have 2 hydrophilic domains that face the cytosol, an N-terminal SPX domain and the central core domain. The central core in vtc4 is the catalytic domain. Vtc1 interacts with GTP-bound Ras-like cdc42, which is subsequently inactivated.

Its subcellular location is the vacuole membrane. Accessory subunit of the vacuolar transporter chaperone (VTC) complex. The VTC complex acts as a vacuolar polyphosphate polymerase that catalyzes the synthesis of inorganic polyphosphate (polyP) via transfer of phosphate from ATP to a growing polyP chain, releasing ADP. VTC exposes its catalytic domain vtc4 to the cytosol, where the growing polyP chain winds through a tunnel-shaped pocket, integrating cytoplasmic polymer synthesis with polyP membrane translocation. The VTC complex carries 9 vacuolar transmembrane domains, which are likely to constitute the translocation channel into the organelle lumen. PolyP synthesis is tightly coupled to its transport into the vacuole lumen, in order to avoid otherwise toxic intermediates in the cytosol, and it depends on the proton gradient across the membrane, formed by V-ATPase. Vtc1 contributes only 3 transmembrane domains to the complex. The VTC complex also plays a role in vacuolar membrane fusion. Involved in the control of cell polarity. This chain is Vacuolar transporter chaperone complex subunit 1, found in Schizosaccharomyces pombe (strain 972 / ATCC 24843) (Fission yeast).